Here is a 236-residue protein sequence, read N- to C-terminus: 1-(5-phosphoribosyl)-5-[(5-phosphoribosylamino)methylideneamino] imidazole-4-carboxamide isomerase (236 aa).

D8 serves as the catalytic Proton acceptor. The active-site Proton donor is D129.

The protein belongs to the HisA/HisF family.

The protein resides in the cytoplasm. It catalyses the reaction 1-(5-phospho-beta-D-ribosyl)-5-[(5-phospho-beta-D-ribosylamino)methylideneamino]imidazole-4-carboxamide = 5-[(5-phospho-1-deoxy-D-ribulos-1-ylimino)methylamino]-1-(5-phospho-beta-D-ribosyl)imidazole-4-carboxamide. It participates in amino-acid biosynthesis; L-histidine biosynthesis; L-histidine from 5-phospho-alpha-D-ribose 1-diphosphate: step 4/9. This Methanoregula boonei (strain DSM 21154 / JCM 14090 / 6A8) protein is 1-(5-phosphoribosyl)-5-[(5-phosphoribosylamino)methylideneamino] imidazole-4-carboxamide isomerase.